Here is an 87-residue protein sequence, read N- to C-terminus: Putative defensin-like protein 84 (87 aa).

An N-terminal signal peptide occupies residues 1–27 (MTTKMVSSHRLLTLMVFALLLIPMISG). 4 cysteine pairs are disulfide-bonded: Cys-32/Cys-73, Cys-36/Cys-54, Cys-42/Cys-71, and Cys-46/Cys-72.

It belongs to the DEFL family.

Its subcellular location is the secreted. The chain is Putative defensin-like protein 84 from Arabidopsis thaliana (Mouse-ear cress).